Consider the following 440-residue polypeptide: Chromosomal replication initiator protein DnaA (440 aa).

Positions 1–74 (MNPSQILENL…VQSGNKAIIN (74 aa)) are domain I, interacts with DnaA modulators. Residues 74–99 (NIQAQSAKQSNKSTKIDIAHIKAQST) are domain II. The tract at residues 100–316 (ILNPSFTFDS…GIIISLNAYA (217 aa)) is domain III, AAA+ region. Positions 146, 148, 149, and 150 each coordinate ATP. The interval 317 to 440 (TILGQEITLE…KNKILVKSQS (124 aa)) is domain IV, binds dsDNA.

This sequence belongs to the DnaA family. In terms of assembly, oligomerizes as a right-handed, spiral filament on DNA at oriC.

The protein resides in the cytoplasm. Plays an essential role in the initiation and regulation of chromosomal replication. ATP-DnaA binds to the origin of replication (oriC) to initiate formation of the DNA replication initiation complex once per cell cycle. Binds the DnaA box (a 9 base pair repeat at the origin) and separates the double-stranded (ds)DNA. Forms a right-handed helical filament on oriC DNA; dsDNA binds to the exterior of the filament while single-stranded (ss)DNA is stabiized in the filament's interior. The ATP-DnaA-oriC complex binds and stabilizes one strand of the AT-rich DNA unwinding element (DUE), permitting loading of DNA polymerase. After initiation quickly degrades to an ADP-DnaA complex that is not apt for DNA replication. Binds acidic phospholipids. This Campylobacter jejuni subsp. jejuni serotype O:23/36 (strain 81-176) protein is Chromosomal replication initiator protein DnaA.